A 908-amino-acid chain; its full sequence is NADH-quinone oxidoreductase subunit G (908 aa).

Residues 2–83 (ATIHVDGKEY…GTFISIDDEE (82 aa)) enclose the 2Fe-2S ferredoxin-type domain. [2Fe-2S] cluster-binding residues include Cys34, Cys45, Cys48, and Cys67. One can recognise a 4Fe-4S His(Cys)3-ligated-type domain in the interval 83–122 (EAKQFRESVVEWLMTNHPHDCPVCEEGGNCHLQDMTVMTG). [4Fe-4S] cluster is bound by residues His99, Cys103, Cys106, Cys112, Cys151, Cys154, Cys157, Cys201, Cys228, Cys231, Cys235, and Cys263. A 4Fe-4S Mo/W bis-MGD-type domain is found at 221-277 (MQFAPSICQQCSIGCNISPGERYGELRRIENRYNGTVNHYFLCDRGRFGYGYVNLKD).

It belongs to the complex I 75 kDa subunit family. In terms of assembly, composed of 13 different subunits. Subunits NuoCD, E, F, and G constitute the peripheral sector of the complex. [2Fe-2S] cluster is required as a cofactor. It depends on [4Fe-4S] cluster as a cofactor.

The protein resides in the cytoplasm. Its subcellular location is the cell inner membrane. It catalyses the reaction a quinone + NADH + 5 H(+)(in) = a quinol + NAD(+) + 4 H(+)(out). Functionally, NDH-1 shuttles electrons from NADH, via FMN and iron-sulfur (Fe-S) centers, to quinones in the respiratory chain. The immediate electron acceptor for the enzyme in this species is believed to be ubiquinone. Couples the redox reaction to proton translocation (for every two electrons transferred, four hydrogen ions are translocated across the cytoplasmic membrane), and thus conserves the redox energy in a proton gradient. The polypeptide is NADH-quinone oxidoreductase subunit G (nuoG) (Escherichia coli (strain K12)).